The primary structure comprises 272 residues: 4-hydroxy-tetrahydrodipicolinate reductase (272 aa).

NAD(+)-binding positions include 10-15 (GAGGRM), Glu-36, 100-102 (GTT), and 124-127 (SGNM). Residue His-157 is the Proton donor/acceptor of the active site. A (S)-2,3,4,5-tetrahydrodipicolinate-binding site is contributed by His-158. Catalysis depends on Lys-161, which acts as the Proton donor. 167 to 168 (GT) contacts (S)-2,3,4,5-tetrahydrodipicolinate.

The protein belongs to the DapB family.

The protein localises to the cytoplasm. The enzyme catalyses (S)-2,3,4,5-tetrahydrodipicolinate + NAD(+) + H2O = (2S,4S)-4-hydroxy-2,3,4,5-tetrahydrodipicolinate + NADH + H(+). It carries out the reaction (S)-2,3,4,5-tetrahydrodipicolinate + NADP(+) + H2O = (2S,4S)-4-hydroxy-2,3,4,5-tetrahydrodipicolinate + NADPH + H(+). It participates in amino-acid biosynthesis; L-lysine biosynthesis via DAP pathway; (S)-tetrahydrodipicolinate from L-aspartate: step 4/4. In terms of biological role, catalyzes the conversion of 4-hydroxy-tetrahydrodipicolinate (HTPA) to tetrahydrodipicolinate. This Afipia carboxidovorans (strain ATCC 49405 / DSM 1227 / KCTC 32145 / OM5) (Oligotropha carboxidovorans) protein is 4-hydroxy-tetrahydrodipicolinate reductase.